The following is a 140-amino-acid chain: uncharacterized protein (140 aa).

Belongs to the SufE family.

This is an uncharacterized protein from Rhizobium meliloti (strain 1021) (Ensifer meliloti).